Consider the following 254-residue polypeptide: 2,3-bisphosphoglycerate-dependent phosphoglycerate mutase (254 aa).

Residues 15 to 22, 28 to 29, R67, 94 to 97, K105, 121 to 122, and 188 to 189 contribute to the substrate site; these read RHGQSEWN, TG, ERHY, RR, and GN. Residue H16 is the Tele-phosphohistidine intermediate of the active site. E94 functions as the Proton donor/acceptor in the catalytic mechanism.

This sequence belongs to the phosphoglycerate mutase family. BPG-dependent PGAM subfamily.

The catalysed reaction is (2R)-2-phosphoglycerate = (2R)-3-phosphoglycerate. It functions in the pathway carbohydrate degradation; glycolysis; pyruvate from D-glyceraldehyde 3-phosphate: step 3/5. Catalyzes the interconversion of 2-phosphoglycerate and 3-phosphoglycerate. The chain is 2,3-bisphosphoglycerate-dependent phosphoglycerate mutase from Corynebacterium jeikeium (strain K411).